We begin with the raw amino-acid sequence, 238 residues long: Tetraspanin-4 (238 aa).

Topologically, residues 1–13 are cytoplasmic; the sequence is MARGCLQGVKYLM. A helical membrane pass occupies residues 14–34; it reads FAFNLLFWLGGCGVLGVGIWL. Topologically, residues 35–55 are extracellular; that stretch reads AATQGNFATLSSSFPSLSAAN. The chain crosses the membrane as a helical span at residues 56 to 76; that stretch reads LLIVTGTFVMAIGFVGCIGAL. Residues 77–85 lie on the Cytoplasmic side of the membrane; it reads KENKCLLLT. A helical transmembrane segment spans residues 86-106; sequence FFVLLLLVFLLEATIAVLFFA. At 107–201 the chain is on the extracellular side; sequence YSDKIDSYAQ…ETVKAWLQEN (95 aa). 2 N-linked (GlcNAc...) asparagine glycosylation sites follow: N152 and N161. A helical transmembrane segment spans residues 202–222; it reads LLAVGIFGLCTALVQILGLTF. At 223–238 the chain is on the cytoplasmic side; that stretch reads AMTMYCQVVKADTYCA.

It belongs to the tetraspanin (TM4SF) family. As to quaternary structure, forms a complex with integrins.

It localises to the membrane. The polypeptide is Tetraspanin-4 (Tspan4) (Mus musculus (Mouse)).